Here is a 216-residue protein sequence, read N- to C-terminus: Cyclin-U4-2 (216 aa).

The protein belongs to the cyclin family. Cyclin U/P subfamily. Interacts with CDKA-1. As to expression, expressed in roots, stems and flowers. Expressed in the shoot apex, leaf primordia and young leaves.

The sequence is that of Cyclin-U4-2 (CYCU4-2) from Arabidopsis thaliana (Mouse-ear cress).